Reading from the N-terminus, the 347-residue chain is Large ribosomal subunit protein uL3 (347 aa).

It belongs to the universal ribosomal protein uL3 family. Part of the 50S ribosomal subunit. Forms a cluster with proteins L14 and L24e.

Its function is as follows. One of the primary rRNA binding proteins, it binds directly near the 3'-end of the 23S rRNA, where it nucleates assembly of the 50S subunit. The protein is Large ribosomal subunit protein uL3 of Caldivirga maquilingensis (strain ATCC 700844 / DSM 13496 / JCM 10307 / IC-167).